The primary structure comprises 259 residues: Imidazole glycerol phosphate synthase subunit HisF (259 aa).

Active-site residues include aspartate 11 and aspartate 130.

Belongs to the HisA/HisF family. As to quaternary structure, heterodimer of HisH and HisF.

Its subcellular location is the cytoplasm. It carries out the reaction 5-[(5-phospho-1-deoxy-D-ribulos-1-ylimino)methylamino]-1-(5-phospho-beta-D-ribosyl)imidazole-4-carboxamide + L-glutamine = D-erythro-1-(imidazol-4-yl)glycerol 3-phosphate + 5-amino-1-(5-phospho-beta-D-ribosyl)imidazole-4-carboxamide + L-glutamate + H(+). It participates in amino-acid biosynthesis; L-histidine biosynthesis; L-histidine from 5-phospho-alpha-D-ribose 1-diphosphate: step 5/9. Functionally, IGPS catalyzes the conversion of PRFAR and glutamine to IGP, AICAR and glutamate. The HisF subunit catalyzes the cyclization activity that produces IGP and AICAR from PRFAR using the ammonia provided by the HisH subunit. The sequence is that of Imidazole glycerol phosphate synthase subunit HisF from Polaromonas naphthalenivorans (strain CJ2).